The following is a 439-amino-acid chain: uncharacterized protein (439 aa).

2 consecutive CBS domains span residues 195–254 and 256–314; these read LTPA…SIEK and MTKN…KQPQ.

This is an uncharacterized protein from Bacillus subtilis (strain 168).